The following is a 489-amino-acid chain: Probable 26S proteasome non-ATPase regulatory subunit 3 (489 aa).

The disordered stretch occupies residues 1–23; that stretch reads MTQDVEMKEVPAPAPSNSVTAAT. The PCI domain maps to 241 to 422; it reads CRYLFYLGKI…GWMVSKETGD (182 aa). The tract at residues 454–489 is disordered; sequence PANSHKDKESAEKRRERQQQEQELAKHIAEEDDDEF. The segment covering 457–482 has biased composition (basic and acidic residues); the sequence is SHKDKESAEKRRERQQQEQELAKHIA.

Belongs to the proteasome subunit S3 family. The 26S proteasome is composed of a core protease, known as the 20S proteasome, capped at one or both ends by the 19S regulatory complex (RC). The RC is composed of at least 18 different subunits in two subcomplexes, the base and the lid, which form the portions proximal and distal to the 20S proteolytic core, respectively.

It is found in the nucleus. Acts as a regulatory subunit of the 26 proteasome which is involved in the ATP-dependent degradation of ubiquitinated proteins. The sequence is that of Probable 26S proteasome non-ATPase regulatory subunit 3 (21D7) from Daucus carota (Wild carrot).